The primary structure comprises 554 residues: Phenylalanine--tRNA ligase beta subunit (554 aa).

Residues 276 to 351 enclose the B5 domain; it reads LTPKSRIISV…INYGYEKFDG (76 aa). Mg(2+)-binding residues include Asp329, Asp335, Glu338, and Glu339.

Belongs to the phenylalanyl-tRNA synthetase beta subunit family. Type 2 subfamily. Tetramer of two alpha and two beta subunits. The cofactor is Mg(2+).

The protein resides in the cytoplasm. It catalyses the reaction tRNA(Phe) + L-phenylalanine + ATP = L-phenylalanyl-tRNA(Phe) + AMP + diphosphate + H(+). This chain is Phenylalanine--tRNA ligase beta subunit, found in Methanococcus maripaludis (strain DSM 14266 / JCM 13030 / NBRC 101832 / S2 / LL).